The primary structure comprises 161 residues: MSQLTHINAAGEAHMVDVSAKAETVREARAEAYVTMRQDTLAMIIDGKHPKGDVFATARIAGIQAAKSTWQLIPLCHPLLLSKVEVTLSVEPVHSRVRIETCCRLCGKTGVEMEALSAASVAALTIYDMCKAVQKDMVIGPVRLLAKSGGKSGDFHAGEVQ.

Substrate-binding positions include 75 to 77 (LCH) and 113 to 114 (ME). Residue Asp128 is part of the active site.

It belongs to the MoaC family. In terms of assembly, homohexamer; trimer of dimers.

It carries out the reaction (8S)-3',8-cyclo-7,8-dihydroguanosine 5'-triphosphate = cyclic pyranopterin phosphate + diphosphate. Its pathway is cofactor biosynthesis; molybdopterin biosynthesis. In terms of biological role, catalyzes the conversion of (8S)-3',8-cyclo-7,8-dihydroguanosine 5'-triphosphate to cyclic pyranopterin monophosphate (cPMP). This Edwardsiella ictaluri (strain 93-146) protein is Cyclic pyranopterin monophosphate synthase.